We begin with the raw amino-acid sequence, 251 residues long: Hydroxyacylglutathione hydrolase (251 aa).

7 residues coordinate Zn(2+): His53, His55, Asp57, His58, His110, Asp127, and His165.

The protein belongs to the metallo-beta-lactamase superfamily. Glyoxalase II family. Monomer. Zn(2+) is required as a cofactor.

The enzyme catalyses an S-(2-hydroxyacyl)glutathione + H2O = a 2-hydroxy carboxylate + glutathione + H(+). It participates in secondary metabolite metabolism; methylglyoxal degradation; (R)-lactate from methylglyoxal: step 2/2. In terms of biological role, thiolesterase that catalyzes the hydrolysis of S-D-lactoyl-glutathione to form glutathione and D-lactic acid. This is Hydroxyacylglutathione hydrolase from Serratia proteamaculans (strain 568).